We begin with the raw amino-acid sequence, 409 residues long: Peptidase T (409 aa).

H78 lines the Zn(2+) pocket. D80 is an active-site residue. D140 is a Zn(2+) binding site. E173 functions as the Proton acceptor in the catalytic mechanism. Zn(2+) contacts are provided by E174, D196, and H379.

This sequence belongs to the peptidase M20B family. Zn(2+) serves as cofactor.

Its subcellular location is the cytoplasm. The catalysed reaction is Release of the N-terminal residue from a tripeptide.. Functionally, cleaves the N-terminal amino acid of tripeptides. The protein is Peptidase T of Salmonella dublin (strain CT_02021853).